The primary structure comprises 259 residues: Putative deoxyribonuclease TATDN1 homolog (259 aa).

Glu82, His116, His138, and Asp186 together coordinate a divalent metal cation.

Belongs to the metallo-dependent hydrolases superfamily. TatD-type hydrolase family. A divalent metal cation serves as cofactor.

The protein resides in the nucleus. In terms of biological role, putative deoxyribonuclease. The chain is Putative deoxyribonuclease TATDN1 homolog from Vairimorpha ceranae (strain BRL01) (Microsporidian parasite).